The primary structure comprises 422 residues: UDP-N-acetylglucosamine 1-carboxyvinyltransferase (422 aa).

22-23 (KN) contributes to the phosphoenolpyruvate binding site. Arg93 is a UDP-N-acetyl-alpha-D-glucosamine binding site. Cys117 acts as the Proton donor in catalysis. Cys117 bears the 2-(S-cysteinyl)pyruvic acid O-phosphothioketal mark. UDP-N-acetyl-alpha-D-glucosamine-binding positions include 122–126 (RPVDL), Asp308, and Leu330.

It belongs to the EPSP synthase family. MurA subfamily.

The protein localises to the cytoplasm. It catalyses the reaction phosphoenolpyruvate + UDP-N-acetyl-alpha-D-glucosamine = UDP-N-acetyl-3-O-(1-carboxyvinyl)-alpha-D-glucosamine + phosphate. Its pathway is cell wall biogenesis; peptidoglycan biosynthesis. Cell wall formation. Adds enolpyruvyl to UDP-N-acetylglucosamine. The sequence is that of UDP-N-acetylglucosamine 1-carboxyvinyltransferase from Helicobacter acinonychis (strain Sheeba).